Reading from the N-terminus, the 63-residue chain is Alpha-conotoxin-like Sm1.3 (63 aa).

The first 16 residues, 1 to 16 (MFTVFLLVVLATTVVS), serve as a signal peptide directing secretion. Positions 17-43 (SPSDRASDGRNAAANEKASDVIALALK) are excised as a propeptide. Disulfide bonds link Cys45–Cys51 and Cys46–Cys59. Residue Met58 is modified to Methionine sulfoxide; partial. Position 59 is a cysteine amide; partial (Cys59).

This sequence belongs to the conotoxin A superfamily. In terms of tissue distribution, expressed by the venom duct.

Its subcellular location is the secreted. In terms of biological role, alpha-conotoxins act on postsynaptic membranes, they bind to the nicotinic acetylcholine receptors (nAChR) and thus inhibit them. In Conus stercusmuscarum (Fly-specked cone), this protein is Alpha-conotoxin-like Sm1.3.